Here is a 313-residue protein sequence, read N- to C-terminus: Interferon-inducible double-stranded RNA-dependent protein kinase activator A (313 aa).

The tract at residues 1 to 20 is disordered; the sequence is MSHSRHRAEAPPLQREDSGT. 3 sufficient for self-association and interaction with TARBP2 regions span residues 1–103, 102–195, and 195–313; these read MSHS…KANA, NASI…FSNI, and ISPE…AERK. At S18 the chain carries Phosphoserine. 3 consecutive DRBM domains span residues 34-101, 126-194, and 240-308; these read TPIQ…ILKA, NPIG…KFSN, and DYIQ…YLKI. 3 positions are modified to phosphoserine: S167, S246, and S287.

This sequence belongs to the PRKRA family. In terms of assembly, homodimer. Interacts with EIF2AK2/PKR through its DRBM domains. Interacts with DICER1, AGO2 and TARBP2. Also able to interact with dsRNA. Interacts with UBC9. Forms a complex with UBC9 and p53/TP53. Interacts with DUS2L (via DRBM domain). Post-translationally, phosphorylated at Ser-246 in unstressed cells and at Ser-287 in stressed cells. Phosphorylation at Ser-246 appears to be a prerequisite for subsequent phosphorylation at Ser-287. Phosphorylation at Ser-246 and Ser-287 are necessary for activation of EIF2AK2/PKR under conditions of stress.

It localises to the cytoplasm. Its subcellular location is the perinuclear region. Activates EIF2AK2/PKR in the absence of double-stranded RNA (dsRNA), leading to phosphorylation of EIF2S1/EFI2-alpha and inhibition of translation and induction of apoptosis. Required for siRNA production by DICER1 and for subsequent siRNA-mediated post-transcriptional gene silencing. Does not seem to be required for processing of pre-miRNA to miRNA by DICER1. Promotes UBC9-p53/TP53 association, sumoylation and phosphorylation of p53/TP53 at 'Lys-386' at 'Ser-392' respectively and enhances its activity in a EIF2AK2/PKR-dependent manner. The polypeptide is Interferon-inducible double-stranded RNA-dependent protein kinase activator A (Prkra) (Rattus norvegicus (Rat)).